A 2201-amino-acid polypeptide reads, in one-letter code: Voltage-dependent T-type calcium channel subunit alpha-1I (2201 aa).

Residues 1 to 45 (MADSNLPPSSAAAPAPEPGITEQPGPRSPPPSPPGLEEPLEGTNP) are disordered. Residues 1 to 76 (MADSNLPPSS…RNWCIKMVCN (76 aa)) are Cytoplasmic-facing. Over residues 26 to 36 (PRSPPPSPPGL) the composition is skewed to pro residues. The I repeat unit spans residues 64–399 (TSPRNWCIKM…LCLVVIATQF (336 aa)). Residues 77–97 (PWFECVSMLVILLNCVTLGMY) traverse the membrane as a helical segment. Topologically, residues 98-115 (QPCDDMECLSDRCKILQV) are extracellular. A helical transmembrane segment spans residues 116 to 137 (FDDFIFIFFAMEMVLKMVALGI). The Cytoplasmic segment spans residues 138–146 (FGKKCYLGD). The helical transmembrane segment at 147–166 (TWNRLDFFIVMAGMVEYSLD) threads the bilayer. Topologically, residues 167–171 (LQNIN) are extracellular. An N-linked (GlcNAc...) asparagine glycan is attached at Asn171. Residues 172 to 189 (LSAIRTVRVLRPLKAINR) traverse the membrane as a helical segment. Topologically, residues 190–209 (VPSMRILVNLLLDTLPMLGN) are cytoplasmic. The helical transmembrane segment at 210 to 230 (VLLLCFFVFFIFGIIGVQLWA) threads the bilayer. Over 231-371 (GLLRNRCFLE…YYVMDAHSFY (141 aa)) the chain is Extracellular. N-linked (GlcNAc...) asparagine glycosylation is found at Asn242 and Asn309. A helical transmembrane segment spans residues 372–396 (NFIYFILLIIVGSFFMINLCLVVIA). Residues 397-598 (TQFSETKQRE…EKLRGIVDSK (202 aa)) lie on the Cytoplasmic side of the membrane. 2 disordered regions span residues 463–500 (QAMG…TPHT) and 513–579 (PSSC…AARL). Over residues 545-554 (SAEAEANGDG) the composition is skewed to low complexity. An II repeat occupies 584-823 (WRETREKLRG…LLVAILVEGF (240 aa)). Residues 599-619 (YFNRGIMMAILVNTVSMGIEH) form a helical membrane-spanning segment. Over 620 to 632 (HEQPEELTNILEI) the chain is Extracellular. Residues 633–654 (CNVVFTSMFALEMILKLAAFGL) traverse the membrane as a helical segment. The Cytoplasmic portion of the chain corresponds to 655 to 660 (FDYLRN). The chain crosses the membrane as a helical span at residues 661–679 (PYNIFDSIIVIISIWEIVG). Topologically, residues 680-687 (QADGGLSV) are extracellular. The chain crosses the membrane as a helical span at residues 688–711 (LRTFRLLRVLKLVRFMPALRRQLV). Topologically, residues 712–722 (VLMKTMDNVAT) are cytoplasmic. Residues 723–743 (FCMLLMLFIFIFSILGMHIFG) traverse the membrane as a helical segment. The Extracellular segment spans residues 744 to 795 (CKFSLRTDTGDTVPDRKNFDSLLWAIVTVFQILTQEDWNVVLYNGMASTTPW). The chain crosses the membrane as a helical span at residues 796-820 (ASLYFVALMTFGNYVLFNLLVAILV). The Cytoplasmic portion of the chain corresponds to 821 to 1125 (EGFQAEGDAN…NKFRILCQTI (305 aa)). The disordered stretch occupies residues 936–969 (WGRSGTWASRRSSWNSLKHKPPSAEHESLLSGEG). A compositionally biased stretch (polar residues) spans 941 to 951 (TWASRRSSWNS). Ser1017 carries the phosphoserine modification. The stretch at 1116–1393 (NKFRILCQTI…MFVGVVVENF (278 aa)) is one III repeat. Residues 1126–1148 (IAHKLFDYVVLAFIFLNCITIAL) form a helical membrane-spanning segment. Residues 1149 to 1166 (ERPQIEAGSTERIFLTVS) are Extracellular-facing. A helical membrane pass occupies residues 1167–1187 (NYIFTAIFVGEMTLKVVSLGL). Topologically, residues 1188–1197 (YFGEQAYLRS) are cytoplasmic. Residues 1198–1217 (SWNVLDGFLVFVSIIDIVVS) form a helical membrane-spanning segment. The Extracellular segment spans residues 1218-1231 (VASAGGAKILGVLR). Residues 1232–1253 (VLRLLRTLRPLRVISRAPGLKL) traverse the membrane as a helical segment. Topologically, residues 1254–1263 (VVETLISSLK) are cytoplasmic. A helical transmembrane segment spans residues 1264-1287 (PIGNIVLICCAFFIIFGILGVQLF). The Extracellular portion of the chain corresponds to 1288–1364 (KGKFYHCLGV…DQQPVTNHNP (77 aa)). N-linked (GlcNAc...) asparagine glycosylation is found at Asn1301 and Asn1304. A helical membrane pass occupies residues 1365–1390 (WMLLYFISFLLIVSFFVLNMFVGVVV). Residues 1391-1445 (ENFHKCRQHQEAEEARRREEKRLRRLEKKRRKAQRLPYYATYCPTRLLIHSMCTS) are Cytoplasmic-facing. One copy of the IV repeat lies at 1431–1692 (TYCPTRLLIH…VVVAVLMKHL (262 aa)). A helical membrane pass occupies residues 1446–1466 (HYLDIFITFIICLNVVTMSLE). Topologically, residues 1467–1480 (HYNQPTSLETALKY) are extracellular. Residues 1481 to 1502 (CNYMFTTVFVLEAVLKLVAFGL) form a helical membrane-spanning segment. The Cytoplasmic segment spans residues 1503–1509 (RRFFKDR). Residues 1510-1528 (WNQLDLAIVLLSVMGITLE) traverse the membrane as a helical segment. Residues 1529-1542 (EIEINAALPINPTI) lie on the Extracellular side of the membrane. A helical transmembrane segment spans residues 1543 to 1566 (IRIMRVLRIARVLKLLKMATGMRA). At 1567–1580 (LLDTVVQALPQVGN) the chain is on the cytoplasmic side. A helical transmembrane segment spans residues 1581-1601 (LGLLFMLLFFIYAALGVELFG). The Extracellular segment spans residues 1602–1664 (KLVCNDENPC…RSCLSSLQFV (63 aa)). Residues 1665 to 1692 (SPLYFVSFVLTAQFVLINVVVAVLMKHL) traverse the membrane as a helical segment. Topologically, residues 1693–1835 (DDSNKEAQED…EVQLAETEAF (143 aa)) are cytoplasmic. Disordered regions lie at residues 1846-1876 (LLGD…PEPM), 1916-1938 (LKHD…PLLQ), 1992-2045 (SDTS…TRRR), 2057-2105 (RGLR…HSET), and 2126-2201 (LTPA…KRKR). Positions 1992 to 2007 (SDTSLDASPSSSAGSL) are enriched in low complexity. Polar residues-rich tracts occupy residues 2008 to 2019 (QTTLEDSLTLSD) and 2066 to 2075 (HSSGGSTSPG). The span at 2077 to 2090 (THHDSMDPSDEEGR) shows a compositional bias: basic and acidic residues.

This sequence belongs to the calcium channel alpha-1 subunit (TC 1.A.1.11) family. CACNA1I subfamily. As to quaternary structure, interacts with CATSPER1 and CATSPER2, leading to suppress T-type calcium channel activity. In terms of processing, in response to raising of intracellular calcium, the T-type channels are activated by CaM-kinase II. In terms of tissue distribution, brain.

It localises to the membrane. The catalysed reaction is Ca(2+)(in) = Ca(2+)(out). Its function is as follows. Voltage-sensitive calcium channels (VSCC) mediate the entry of calcium ions into excitable cells and are also involved in a variety of calcium-dependent processes, including muscle contraction, hormone or neurotransmitter release, gene expression, cell motility, cell division and cell death. This channel gives rise to T-type calcium currents. T-type calcium channels belong to the 'low-voltage activated (LVA)' group and are strongly blocked by nickel and mibefradil. A particularity of this type of channels is an opening at quite negative potentials, and a voltage-dependent inactivation. T-type channels serve pacemaking functions in both central neurons and cardiac nodal cells and support calcium signaling in secretory cells and vascular smooth muscle. They may also be involved in the modulation of firing patterns of neurons which is important for information processing as well as in cell growth processes. Gates in voltage ranges similar to, but higher than alpha 1G or alpha 1H. Functionally, voltage-sensitive calcium channels (VSCC) mediate the entry of calcium ions into excitable cells and are also involved in a variety of calcium-dependent processes, including muscle contraction, hormone or neurotransmitter release, gene expression, cell motility, cell division and cell death. This channel gives rise to T-type calcium currents. The chain is Voltage-dependent T-type calcium channel subunit alpha-1I (Cacna1i) from Rattus norvegicus (Rat).